A 297-amino-acid polypeptide reads, in one-letter code: Phosphoribosylaminoimidazole-succinocarboxamide synthase (297 aa).

It belongs to the SAICAR synthetase family.

It catalyses the reaction 5-amino-1-(5-phospho-D-ribosyl)imidazole-4-carboxylate + L-aspartate + ATP = (2S)-2-[5-amino-1-(5-phospho-beta-D-ribosyl)imidazole-4-carboxamido]succinate + ADP + phosphate + 2 H(+). It participates in purine metabolism; IMP biosynthesis via de novo pathway; 5-amino-1-(5-phospho-D-ribosyl)imidazole-4-carboxamide from 5-amino-1-(5-phospho-D-ribosyl)imidazole-4-carboxylate: step 1/2. The chain is Phosphoribosylaminoimidazole-succinocarboxamide synthase from Saccharopolyspora erythraea (strain ATCC 11635 / DSM 40517 / JCM 4748 / NBRC 13426 / NCIMB 8594 / NRRL 2338).